The primary structure comprises 245 residues: Ribosomal RNA small subunit methyltransferase G (245 aa).

Residues glycine 90, leucine 95, 140–141 (AE), and arginine 158 each bind S-adenosyl-L-methionine.

Belongs to the methyltransferase superfamily. RNA methyltransferase RsmG family.

It localises to the cytoplasm. In terms of biological role, specifically methylates the N7 position of guanine in position 518 of 16S rRNA. The polypeptide is Ribosomal RNA small subunit methyltransferase G (Mycobacterium leprae (strain TN)).